The primary structure comprises 378 residues: Cysteine synthase (378 aa).

The disordered stretch occupies residues 10–31 (NSEGDSNQQQNNNNNSNNNLKE). Low complexity predominate over residues 15–28 (SNQQQNNNNNSNNN). K79 is subject to N6-(pyridoxal phosphate)lysine. Pyridoxal 5'-phosphate-binding positions include 215–219 (GTGGT) and S319.

This sequence belongs to the cysteine synthase/cystathionine beta-synthase family. It depends on pyridoxal 5'-phosphate as a cofactor.

It carries out the reaction O-acetyl-L-serine + hydrogen sulfide = L-cysteine + acetate. The protein operates within amino-acid biosynthesis; L-cysteine biosynthesis; L-cysteine from L-serine: step 2/2. The protein is Cysteine synthase (cysK) of Dictyostelium discoideum (Social amoeba).